Consider the following 875-residue polypeptide: Alanine--tRNA ligase (875 aa).

Zn(2+)-binding residues include histidine 565, histidine 569, cysteine 666, and histidine 670.

The protein belongs to the class-II aminoacyl-tRNA synthetase family. Zn(2+) is required as a cofactor.

It is found in the cytoplasm. The enzyme catalyses tRNA(Ala) + L-alanine + ATP = L-alanyl-tRNA(Ala) + AMP + diphosphate. Functionally, catalyzes the attachment of alanine to tRNA(Ala) in a two-step reaction: alanine is first activated by ATP to form Ala-AMP and then transferred to the acceptor end of tRNA(Ala). Also edits incorrectly charged Ser-tRNA(Ala) and Gly-tRNA(Ala) via its editing domain. The polypeptide is Alanine--tRNA ligase (Leptothrix cholodnii (strain ATCC 51168 / LMG 8142 / SP-6) (Leptothrix discophora (strain SP-6))).